The primary structure comprises 219 residues: Probable GTP-binding protein EngB (219 aa).

The EngB-type G domain maps to 24–207 (VQPEIAFAGR…HELIESWLRP (184 aa)). Residues 32–39 (GRSNAGKS), 59–63 (GRTQH), 81–84 (DLPG), 148–151 (TKCD), and 186–188 (FSA) contribute to the GTP site. The Mg(2+) site is built by serine 39 and threonine 61.

The protein belongs to the TRAFAC class TrmE-Era-EngA-EngB-Septin-like GTPase superfamily. EngB GTPase family. Requires Mg(2+) as cofactor.

Functionally, necessary for normal cell division and for the maintenance of normal septation. This is Probable GTP-binding protein EngB from Burkholderia vietnamiensis (strain G4 / LMG 22486) (Burkholderia cepacia (strain R1808)).